The following is a 564-amino-acid chain: E3 ubiquitin-protein ligase hrd-like protein 1 (564 aa).

A helical transmembrane segment spans residues 17-37 (SYLALSVLVAIVASVTVFTTF). Residue N53 is glycosylated (N-linked (GlcNAc...) asparagine). A run of 7 helical transmembrane segments spans residues 61–81 (YGLN…HYIL), 86–106 (LIWV…RLII), 123–143 (QAFF…IGPQ), 148–168 (VMPW…QFIT), 185–205 (KISF…FLIS), 215–235 (PAVL…YILF), and 272–292 (LSFA…IFFL). An RING-type; atypical zinc finger spans residues 335 to 373 (CVVCWELLGTSRRLPCSHQFHDWCLMWWLAQDSSCPTCR). The CUE domain occupies 432–474 (QLQTMLEQVREMFPQMSVDIIMTDLRQSGSAQSTIENILEGRI).

Its subcellular location is the membrane. Functionally, proposed to have a role in neuroprotection. In Caenorhabditis elegans, this protein is E3 ubiquitin-protein ligase hrd-like protein 1 (hrdl-1).